The sequence spans 409 residues: Peptidase T (409 aa).

His80 contacts Zn(2+). Asp82 is a catalytic residue. Asp143 provides a ligand contact to Zn(2+). Glu177 acts as the Proton acceptor in catalysis. Residues Glu178, Asp200, and His382 each contribute to the Zn(2+) site.

The protein belongs to the peptidase M20B family. The cofactor is Zn(2+).

The protein localises to the cytoplasm. The enzyme catalyses Release of the N-terminal residue from a tripeptide.. Its function is as follows. Cleaves the N-terminal amino acid of tripeptides. The sequence is that of Peptidase T from Enterococcus faecalis (strain ATCC 700802 / V583).